A 1256-amino-acid polypeptide reads, in one-letter code: Receptor tyrosine-protein kinase erbB-2 (1256 aa).

Positions 1–22 are cleaved as a signal peptide; sequence MELAAWCRWGFLLALLSPGAAG. The Extracellular portion of the chain corresponds to 23–653; the sequence is TQVCTGTDMK…PAEQRASPVT (631 aa). A disulfide bridge links cysteine 26 with cysteine 53. N-linked (GlcNAc...) asparagine glycans are attached at residues asparagine 68, asparagine 125, and asparagine 188. Intrachain disulfides connect cysteine 163-cysteine 193, cysteine 196-cysteine 205, cysteine 200-cysteine 213, cysteine 221-cysteine 228, cysteine 225-cysteine 236, cysteine 237-cysteine 245, cysteine 241-cysteine 253, cysteine 256-cysteine 265, cysteine 269-cysteine 296, cysteine 300-cysteine 312, cysteine 316-cysteine 332, cysteine 335-cysteine 339, cysteine 343-cysteine 368, cysteine 476-cysteine 505, cysteine 512-cysteine 521, and cysteine 516-cysteine 529. Residue asparagine 260 is glycosylated (N-linked (GlcNAc...) asparagine). The N-linked (GlcNAc...) asparagine glycan is linked to asparagine 531. Disulfide bonds link cysteine 532/cysteine 541, cysteine 545/cysteine 561, cysteine 564/cysteine 577, cysteine 568/cysteine 585, cysteine 588/cysteine 597, cysteine 601/cysteine 624, cysteine 627/cysteine 635, and cysteine 631/cysteine 643. Residue asparagine 572 is glycosylated (N-linked (GlcNAc...) asparagine). The N-linked (GlcNAc...) asparagine glycan is linked to asparagine 630. The chain crosses the membrane as a helical span at residues 654-674; that stretch reads FIIATVVGVLLFLIIVVVIGI. Residues 675–1256 are Cytoplasmic-facing; it reads LIKRRRQKIR…PEYLGLDVPV (582 aa). The segment at 677-690 is required for interaction with KPNB1 and EEA1; the sequence is KRRRQKIRKYTMRR. The Nuclear localization signal motif lies at 677-690; that stretch reads KRRRQKIRKYTMRR. Residues 721 to 988 enclose the Protein kinase domain; it reads LRKLKVLGSG…RMARDPQRFV (268 aa). ATP contacts are provided by residues 727 to 735 and lysine 754; that span reads LGSGAFGTV. Catalysis depends on aspartate 846, which acts as the Proton acceptor. A Phosphotyrosine modification is found at tyrosine 878. Residues 1030–1180 form a disordered region; it reads GFFSPDPALG…PKTLSPGKNG (151 aa). Serine 1055, serine 1079, serine 1084, and serine 1108 each carry phosphoserine. Tyrosine 1113 is subject to Phosphotyrosine. The residue at position 1140 (tyrosine 1140) is a Phosphotyrosine; by autocatalysis. Residue threonine 1167 is modified to Phosphothreonine. The segment at 1196-1198 is interaction with PIK3C2B; that stretch reads EYL. Phosphotyrosine is present on tyrosine 1197. Disordered regions lie at residues 1200–1219 and 1224–1256; these read PRAG…PAFD and WDQN…DVPV. Tyrosine 1249 is subject to Phosphotyrosine; by autocatalysis.

Belongs to the protein kinase superfamily. Tyr protein kinase family. EGF receptor subfamily. In terms of assembly, homodimer. Heterodimer with EGFR, ERBB3 and ERBB4. Part of a complex with EGFR and either PIK3C2A or PIK3C2B. May interact with PIK3C2B when phosphorylated on Tyr-1197. Interacts with PLXNB1. Interacts (when phosphorylated on Tyr-1249) with MEMO1. Interacts with MUC1. Interacts (when phosphorylated on Tyr-1140) with GRB7 (via SH2 domain). Interacts (when phosphorylated on Tyr-1249) with ERBIN. Interacts with KPNB1, RANBP2, EEA1, CRM1, CLTC, PTK6, RPA194 and ACTB. Interacts (preferentially with the tyrosine phosphorylated form) with CPNE3; this interaction occurs at the cell membrane and is increased in a growth factor heregulin-dependent manner. Interacts with HSP90AA1 and HSP90AB1 in an ATP-dependent manner; the interaction suppresses ERBB2 kinase activity. Interacts with SRC. Interacts with MYOC. Interacts with PRKCABP. Interacts with SORL1; this interaction regulates ERBB2 subcellular distribution by promoting its recycling after internalization from endosomes back to the plasma membrane, hence stimulates ERBB2-mediated signaling. Interacts with SH3BGRL. Interacts with ROR1. In terms of processing, autophosphorylated. Autophosphorylation occurs in trans, i.e. one subunit of the dimeric receptor phosphorylates tyrosine residues on the other subunit. Ligand-binding increases phosphorylation on tyrosine residues. Signaling via SEMA4C promotes phosphorylation at Tyr-1249. Dephosphorylated by PTPN12. As to expression, expressed predominantly in uterine epithelial cells. In the muscle, expression localizes to the synaptic sites of muscle fibers.

Its subcellular location is the cell membrane. It localises to the cell projection. It is found in the ruffle membrane. The protein localises to the early endosome. The protein resides in the cytoplasm. Its subcellular location is the perinuclear region. It localises to the nucleus. The enzyme catalyses L-tyrosyl-[protein] + ATP = O-phospho-L-tyrosyl-[protein] + ADP + H(+). Its function is as follows. Protein tyrosine kinase that is part of several cell surface receptor complexes, but that apparently needs a coreceptor for ligand binding. Essential component of a neuregulin-receptor complex, although neuregulins do not interact with it alone. GP30 is a potential ligand for this receptor. Regulates outgrowth and stabilization of peripheral microtubules (MTs). Upon ERBB2 activation, the MEMO1-RHOA-DIAPH1 signaling pathway elicits the phosphorylation and thus the inhibition of GSK3B at cell membrane. This prevents the phosphorylation of APC and CLASP2, allowing its association with the cell membrane. In turn, membrane-bound APC allows the localization of MACF1 to the cell membrane, which is required for microtubule capture and stabilization. Functionally, in the nucleus is involved in transcriptional regulation. Associates with the 5'-TCAAATTC-3' sequence in the PTGS2/COX-2 promoter and activates its transcription. Implicated in transcriptional activation of CDKN1A; the function involves STAT3 and SRC. Involved in the transcription of rRNA genes by RNA Pol I and enhances protein synthesis and cell growth. In Mus musculus (Mouse), this protein is Receptor tyrosine-protein kinase erbB-2 (Erbb2).